Here is a 618-residue protein sequence, read N- to C-terminus: Sulfite reductase [NADPH] flavoprotein alpha-component (618 aa).

One can recognise a Flavodoxin-like domain in the interval 64 to 202 (VTLISASQTG…QAQQWRQQVV (139 aa)). FMN-binding positions include 70-75 (SQTGNA), 117-120 (STQG), and 153-162 (LGDTSYEHFC). The FAD-binding FR-type domain occupies 253-467 (TAPLTAQLSV…IEHNDNFRLP (215 aa)). FAD is bound by residues Thr-341, Lys-375, 405–408 (RLYS), 423–425 (TVG), Tyr-429, and 438–441 (GGAS). Residues 538–539 (SR), 544–548 (KIYVQ), and Asp-580 contribute to the NADP(+) site. Tyr-618 lines the FAD pocket.

The protein belongs to the NADPH-dependent sulphite reductase flavoprotein subunit CysJ family. It in the N-terminal section; belongs to the flavodoxin family. In the C-terminal section; belongs to the flavoprotein pyridine nucleotide cytochrome reductase family. Alpha(8)-beta(8). The alpha component is a flavoprotein, the beta component is a hemoprotein. Requires FAD as cofactor. FMN serves as cofactor.

It carries out the reaction hydrogen sulfide + 3 NADP(+) + 3 H2O = sulfite + 3 NADPH + 4 H(+). The protein operates within sulfur metabolism; hydrogen sulfide biosynthesis; hydrogen sulfide from sulfite (NADPH route): step 1/1. In terms of biological role, component of the sulfite reductase complex that catalyzes the 6-electron reduction of sulfite to sulfide. This is one of several activities required for the biosynthesis of L-cysteine from sulfate. The flavoprotein component catalyzes the electron flow from NADPH -&gt; FAD -&gt; FMN to the hemoprotein component. The polypeptide is Sulfite reductase [NADPH] flavoprotein alpha-component (Yersinia pseudotuberculosis serotype I (strain IP32953)).